The primary structure comprises 278 residues: 4-diphosphocytidyl-2-C-methyl-D-erythritol kinase (278 aa).

K9 is a catalytic residue. 93–103 (PLGGGLGGGSS) is an ATP binding site. D135 is an active-site residue.

The protein belongs to the GHMP kinase family. IspE subfamily.

It catalyses the reaction 4-CDP-2-C-methyl-D-erythritol + ATP = 4-CDP-2-C-methyl-D-erythritol 2-phosphate + ADP + H(+). It functions in the pathway isoprenoid biosynthesis; isopentenyl diphosphate biosynthesis via DXP pathway; isopentenyl diphosphate from 1-deoxy-D-xylulose 5-phosphate: step 3/6. Functionally, catalyzes the phosphorylation of the position 2 hydroxy group of 4-diphosphocytidyl-2C-methyl-D-erythritol. The sequence is that of 4-diphosphocytidyl-2-C-methyl-D-erythritol kinase from Nitrosomonas europaea (strain ATCC 19718 / CIP 103999 / KCTC 2705 / NBRC 14298).